The following is a 295-amino-acid chain: RNA polymerase sigma factor RpoH (295 aa).

The sigma-70 factor domain-2 stretch occupies residues 52 to 121 (MVTSHLRLVA…IQEYILRSWS (70 aa)). The Interaction with polymerase core subunit RpoC signature appears at 76–79 (EVIS). Positions 230–281 (AMVELTDRERHILTERRLKDDPTTLEELAAQYGVSRERVRQIEVRAFEKLQK) are sigma-70 factor domain-4. A DNA-binding region (H-T-H motif) is located at residues 254 to 273 (LEELAAQYGVSRERVRQIEV).

The protein belongs to the sigma-70 factor family. RpoH subfamily. In terms of assembly, interacts with the RNA polymerase core enzyme.

The protein resides in the cytoplasm. In terms of biological role, sigma factors are initiation factors that promote the attachment of RNA polymerase to specific initiation sites and are then released. This sigma factor is involved in regulation of expression of heat shock genes. In Caulobacter vibrioides (strain ATCC 19089 / CIP 103742 / CB 15) (Caulobacter crescentus), this protein is RNA polymerase sigma factor RpoH.